The primary structure comprises 750 residues: Photosystem I P700 chlorophyll a apoprotein A1 (750 aa).

8 consecutive transmembrane segments (helical) span residues 70–93 (VFSAHFGQLSIIFLWLSGMYFHGA), 156–179 (LYCTAIGALVFAALMLFAGWFHYH), 195–219 (LNHHLAGLLGLGSLSWAGHQVHVSL), 291–309 (IAHHHLAIAILFLIAGHMY), 346–369 (WHAQLALNLAMLGSLTIVVAHHMY), 385–411 (LSLFTHHMWIGGFLIVGAAAHAAIFMV), 433–455 (AIISHLNWVCIFLGFHSFGLYIH), and 531–549 (FLVHHIHAFTIHVTVLILL). Positions 573 and 582 each coordinate [4Fe-4S] cluster. The next 2 helical transmembrane spans lie at 589–610 (HVFLGLFWMYNAISVVIFHFSW) and 664–686 (LSAYGLFFLGAHFVWAFSLMFLF). H675 provides a ligand contact to chlorophyll a'. Positions 683 and 691 each coordinate chlorophyll a. W692 contributes to the phylloquinone binding site. A helical transmembrane segment spans residues 724–744 (AVGVTHYLLGGIATTWAFFLA).

This sequence belongs to the PsaA/PsaB family. As to quaternary structure, the PsaA/B heterodimer binds the P700 chlorophyll special pair and subsequent electron acceptors. PSI consists of a core antenna complex that captures photons, and an electron transfer chain that converts photonic excitation into a charge separation. The eukaryotic PSI reaction center is composed of at least 11 subunits. P700 is a chlorophyll a/chlorophyll a' dimer, A0 is one or more chlorophyll a, A1 is one or both phylloquinones and FX is a shared 4Fe-4S iron-sulfur center. is required as a cofactor.

Its subcellular location is the plastid. It localises to the chloroplast thylakoid membrane. The catalysed reaction is reduced [plastocyanin] + hnu + oxidized [2Fe-2S]-[ferredoxin] = oxidized [plastocyanin] + reduced [2Fe-2S]-[ferredoxin]. Its function is as follows. PsaA and PsaB bind P700, the primary electron donor of photosystem I (PSI), as well as the electron acceptors A0, A1 and FX. PSI is a plastocyanin-ferredoxin oxidoreductase, converting photonic excitation into a charge separation, which transfers an electron from the donor P700 chlorophyll pair to the spectroscopically characterized acceptors A0, A1, FX, FA and FB in turn. Oxidized P700 is reduced on the lumenal side of the thylakoid membrane by plastocyanin. In Nymphaea alba (White water-lily), this protein is Photosystem I P700 chlorophyll a apoprotein A1.